The following is a 158-amino-acid chain: UPAR/Ly6 domain-containing protein crim (158 aa).

Positions 1-22 (MHYHTNLIAALLLAALIHEGSA) are cleaved as a signal peptide. The Extracellular portion of the chain corresponds to 23 to 136 (IWCYRCTSAT…FCFLDHRCNG (114 aa)). Asn107 carries an N-linked (GlcNAc...) asparagine glycan. Asn135 is lipidated: GPI-anchor amidated asparagine. Residues 136–158 (GASGLQTSAVIGLLTLIPALLLR) constitute a propeptide, removed in mature form. The helical transmembrane segment at 137-157 (ASGLQTSAVIGLLTLIPALLL) threads the bilayer. Position 158 (Arg158) is a topological domain, cytoplasmic.

This sequence belongs to the quiver family.

The protein localises to the membrane. Its function is as follows. Required for septate junction assembly possibly by organizing the preassembly and transport of septate junction proteins. Involved in epithelial cell septate junction-mediated paracellular barrier functions of trachea, hindgut and salivary gland. This chain is UPAR/Ly6 domain-containing protein crim, found in Drosophila melanogaster (Fruit fly).